The chain runs to 437 residues: tRNA-queuosine alpha-mannosyltransferase (437 aa).

The protein belongs to the glycosyltransferase group 1 family. Glycosyltransferase 4 subfamily.

Its subcellular location is the cytoplasm. It is found in the nucleus. It carries out the reaction queuosine(34) in tRNA(Asp) + GDP-alpha-D-mannose = O-4''-alpha-D-mannosylqueuosine(34) in tRNA(Asp) + GDP + H(+). Glycosyltransferase that specifically catalyzes mannosylation of cytoplasmic tRNA(Asp) modified with queuosine at position 34 (queuosine(34)). Mannosylates the cyclopentene moiety of queuosine(34) in tRNA(Asp) to form mannosyl-queuosine(34). Mannosylation of queuosine(34) in tRNA(Asp) is required to slow-down elongation at cognate codons, GAC and GAU, thereby regulating protein translation. The polypeptide is tRNA-queuosine alpha-mannosyltransferase (gtdc1) (Xenopus laevis (African clawed frog)).